A 297-amino-acid polypeptide reads, in one-letter code: SWIRM domain-containing protein laf1 (297 aa).

Disordered stretches follow at residues 50-70 and 109-173; these read PKCSTIPESPKDSIVEPKPTA and STPA…EFSS. Over residues 159–173 the composition is skewed to polar residues; it reads QHNTRFKQSSREFSS. The 91-residue stretch at 207-297 folds into the SWIRM domain; it reads LRSEWKGPPL…AFHDEGFFDD (91 aa).

In terms of assembly, component of the RPD3C(L) complex.

The protein resides in the nucleus. In terms of biological role, component of the RPD3C(L) histone deacetylase complex (HDAC) responsible for the deacetylation of lysine residues on the N-terminal part of the core histones (H2A, H2B, H3 and H4). Histone deacetylation gives a tag for epigenetic repression and plays an important role in transcriptional regulation, cell cycle progression and developmental events. The protein is SWIRM domain-containing protein laf1 (laf1) of Schizosaccharomyces pombe (strain 972 / ATCC 24843) (Fission yeast).